A 623-amino-acid chain; its full sequence is Membrane protein insertase YidC (623 aa).

5 helical membrane-spanning segments follow: residues 8–28 (LILATGLSFLVIMVWFFLFPP), 379–399 (MGLAIIALTFLLKALVLPLAY), 449–469 (LPILIQIPIFFSLYKVIFVTI), 507–527 (TTMALIFIGALPILLGVSMWL), and 543–563 (IFAWMPWVFMFMLGHFASGLV). The segment covering 601 to 617 (KPAAQPAGKAANDGAAP) has biased composition (low complexity). The tract at residues 601-623 (KPAAQPAGKAANDGAAPAKKRKP) is disordered.

This sequence belongs to the OXA1/ALB3/YidC family. Type 1 subfamily. As to quaternary structure, interacts with the Sec translocase complex via SecD. Specifically interacts with transmembrane segments of nascent integral membrane proteins during membrane integration.

It is found in the cell inner membrane. In terms of biological role, required for the insertion and/or proper folding and/or complex formation of integral membrane proteins into the membrane. Involved in integration of membrane proteins that insert both dependently and independently of the Sec translocase complex, as well as at least some lipoproteins. Aids folding of multispanning membrane proteins. The polypeptide is Membrane protein insertase YidC (Cereibacter sphaeroides (strain ATCC 17023 / DSM 158 / JCM 6121 / CCUG 31486 / LMG 2827 / NBRC 12203 / NCIMB 8253 / ATH 2.4.1.) (Rhodobacter sphaeroides)).